The sequence spans 284 residues: Cytochrome P450 2C31 (284 aa).

Heme is bound at residue Cys229.

The protein belongs to the cytochrome P450 family. It depends on heme as a cofactor.

The protein localises to the endoplasmic reticulum membrane. It is found in the microsome membrane. The enzyme catalyses an organic molecule + reduced [NADPH--hemoprotein reductase] + O2 = an alcohol + oxidized [NADPH--hemoprotein reductase] + H2O + H(+). Its function is as follows. Cytochromes P450 are a group of heme-thiolate monooxygenases. In liver microsomes, this enzyme is involved in an NADPH-dependent electron transport pathway. It oxidizes a variety of structurally unrelated compounds, including steroids, fatty acids, and xenobiotics. The chain is Cytochrome P450 2C31 (CYP2C31) from Capra hircus aegagrus (Wild goat).